Reading from the N-terminus, the 443-residue chain is Thymidine phosphorylase (443 aa).

The protein belongs to the thymidine/pyrimidine-nucleoside phosphorylase family. In terms of assembly, homodimer.

The catalysed reaction is thymidine + phosphate = 2-deoxy-alpha-D-ribose 1-phosphate + thymine. It functions in the pathway pyrimidine metabolism; dTMP biosynthesis via salvage pathway; dTMP from thymine: step 1/2. Functionally, the enzymes which catalyze the reversible phosphorolysis of pyrimidine nucleosides are involved in the degradation of these compounds and in their utilization as carbon and energy sources, or in the rescue of pyrimidine bases for nucleotide synthesis. This Aeromonas hydrophila subsp. hydrophila (strain ATCC 7966 / DSM 30187 / BCRC 13018 / CCUG 14551 / JCM 1027 / KCTC 2358 / NCIMB 9240 / NCTC 8049) protein is Thymidine phosphorylase.